Reading from the N-terminus, the 600-residue chain is Dihydroxy-acid dehydratase (600 aa).

D82 serves as a coordination point for Mg(2+). C123 contacts [2Fe-2S] cluster. Mg(2+) contacts are provided by D124 and K125. K125 carries the N6-carboxylysine modification. C192 is a binding site for [2Fe-2S] cluster. Mg(2+) is bound at residue E489. The Proton acceptor role is filled by S515.

The protein belongs to the IlvD/Edd family. As to quaternary structure, homodimer. Requires [2Fe-2S] cluster as cofactor. Mg(2+) is required as a cofactor.

The enzyme catalyses (2R)-2,3-dihydroxy-3-methylbutanoate = 3-methyl-2-oxobutanoate + H2O. It catalyses the reaction (2R,3R)-2,3-dihydroxy-3-methylpentanoate = (S)-3-methyl-2-oxopentanoate + H2O. The protein operates within amino-acid biosynthesis; L-isoleucine biosynthesis; L-isoleucine from 2-oxobutanoate: step 3/4. It participates in amino-acid biosynthesis; L-valine biosynthesis; L-valine from pyruvate: step 3/4. Functions in the biosynthesis of branched-chain amino acids. Catalyzes the dehydration of (2R,3R)-2,3-dihydroxy-3-methylpentanoate (2,3-dihydroxy-3-methylvalerate) into 2-oxo-3-methylpentanoate (2-oxo-3-methylvalerate) and of (2R)-2,3-dihydroxy-3-methylbutanoate (2,3-dihydroxyisovalerate) into 2-oxo-3-methylbutanoate (2-oxoisovalerate), the penultimate precursor to L-isoleucine and L-valine, respectively. The sequence is that of Dihydroxy-acid dehydratase from Bacteroides thetaiotaomicron (strain ATCC 29148 / DSM 2079 / JCM 5827 / CCUG 10774 / NCTC 10582 / VPI-5482 / E50).